The chain runs to 462 residues: DIMBOA UDP-glucosyltransferase BX9 (462 aa).

The Proton acceptor role is filled by H24. H24 serves as a coordination point for an anthocyanidin. The Charge relay role is filled by D115. 8 residues coordinate UDP-alpha-D-glucose: T137, A336, Q338, H353, W356, N357, S358, and E361. An anthocyanidin is bound at residue G376. D377 and Q378 together coordinate UDP-alpha-D-glucose.

This sequence belongs to the UDP-glycosyltransferase family. Mg(2+) is required as a cofactor. Ca(2+) serves as cofactor. Expressed at the same levels in roots and shoots.

The catalysed reaction is DIMBOA + UDP-alpha-D-glucose = DIMBOA beta-D-glucoside + UDP + H(+). The enzyme catalyses DIBOA + UDP-alpha-D-glucose = DIBOA beta-D-glucoside + UDP + H(+). In terms of biological role, glucosyltransferase involved in the last step of benzoxazinoid glucoside biosynthesis. Catalyzes the glucosylation of hydroxamic acids utilizing UDP-glucose as glucose doner, reducing the toxicity of these natural insecticides for storage. Can use DIMBOA and DIBOA as substrates, HMBOA (2-hydroxy-7-methoxy-2H-1,4-benzoxazin-3(4H)-one) and HBOA (2-hydroxy-2H-1,4-benzoxazin-3(4H)-one) with a lower efficiency, but not indole acetic acid or quercitin. This is DIMBOA UDP-glucosyltransferase BX9 (BX9) from Zea mays (Maize).